The sequence spans 152 residues: MVKAVCVINGDAKGTVFFEQETSEAPVKVTGEVLGLAKGLHGFHVHEFGDNTNGCMSSGPHFNPRNKEHGAPTDENRHLGDLGNIQAAGDSPTAVSITDSKITLFGADSIIGRTVVVHADADDLGKGGHELSKTTGNAGARIGCGVIGIAKI.

Histidine 44, histidine 46, and histidine 61 together coordinate Cu cation. Zn(2+)-binding residues include histidine 61, histidine 69, histidine 78, and aspartate 81. Histidine 118 contacts Cu cation.

The protein belongs to the Cu-Zn superoxide dismutase family. In terms of assembly, homodimer. Cu cation is required as a cofactor. Requires Zn(2+) as cofactor.

It is found in the cytoplasm. It carries out the reaction 2 superoxide + 2 H(+) = H2O2 + O2. Its function is as follows. Destroys radicals which are normally produced within the cells and which are toxic to biological systems. This is Superoxide dismutase [Cu-Zn] from Drosophila pseudoobscura pseudoobscura (Fruit fly).